A 384-amino-acid polypeptide reads, in one-letter code: Beta-ureidopropionase (384 aa).

Residues 72 to 344 (VHVGLVQNRI…DGLLVAKLDL (273 aa)) form the CN hydrolase domain. The active-site Proton acceptor is the Glu-119. The Proton donor role is filled by Lys-196. Cys-233 serves as the catalytic Nucleophile. Ser-378 carries the phosphoserine modification.

Belongs to the carbon-nitrogen hydrolase superfamily. BUP family. As to quaternary structure, homodimer, homotetramer, homooctamer; can also form higher homooligomers.

It is found in the cytoplasm. The enzyme catalyses 3-(carbamoylamino)propanoate + H2O + 2 H(+) = beta-alanine + NH4(+) + CO2. The catalysed reaction is 3-(carbamoylamino)-2-methylpropanoate + H2O + 2 H(+) = (R)-3-amino-2-methylpropanoate + NH4(+) + CO2. Its pathway is amino-acid biosynthesis; beta-alanine biosynthesis. In terms of biological role, catalyzes a late step in pyrimidine degradation. Converts N-carbamoyl-beta-alanine (3-ureidopropanoate) into beta-alanine, ammonia and carbon dioxide. Likewise, converts N-carbamoyl-beta-aminoisobutyrate (3-ureidoisobutyrate) into beta-aminoisobutyrate, ammonia and carbon dioxide. This chain is Beta-ureidopropionase (UPB1), found in Pongo abelii (Sumatran orangutan).